Consider the following 462-residue polypeptide: ATP synthase subunit beta (462 aa).

Glycine 152 to threonine 159 contributes to the ATP binding site.

Belongs to the ATPase alpha/beta chains family. In terms of assembly, F-type ATPases have 2 components, CF(1) - the catalytic core - and CF(0) - the membrane proton channel. CF(1) has five subunits: alpha(3), beta(3), gamma(1), delta(1), epsilon(1). CF(0) has three main subunits: a(1), b(2) and c(9-12). The alpha and beta chains form an alternating ring which encloses part of the gamma chain. CF(1) is attached to CF(0) by a central stalk formed by the gamma and epsilon chains, while a peripheral stalk is formed by the delta and b chains.

It is found in the cell inner membrane. The catalysed reaction is ATP + H2O + 4 H(+)(in) = ADP + phosphate + 5 H(+)(out). Functionally, produces ATP from ADP in the presence of a proton gradient across the membrane. The catalytic sites are hosted primarily by the beta subunits. In Aeromonas hydrophila subsp. hydrophila (strain ATCC 7966 / DSM 30187 / BCRC 13018 / CCUG 14551 / JCM 1027 / KCTC 2358 / NCIMB 9240 / NCTC 8049), this protein is ATP synthase subunit beta.